A 491-amino-acid polypeptide reads, in one-letter code: Transmembrane protein 200A (491 aa).

Over Met-1–Ser-61 the chain is Cytoplasmic. Residues Arg-16 to Arg-41 form a disordered region. Polar residues predominate over residues Ala-20–Thr-34. Residues Gly-62 to Gly-82 form a helical membrane-spanning segment. The Extracellular segment spans residues Tyr-83 to Lys-126. N-linked (GlcNAc...) asparagine glycosylation occurs at Asn-100. The helical transmembrane segment at Met-127–Leu-147 threads the bilayer. At His-148–Phe-491 the chain is on the cytoplasmic side. Phosphoserine is present on Ser-350.

This sequence belongs to the TMEM200 family. Expressed in cerebellum.

It is found in the membrane. The protein is Transmembrane protein 200A (TMEM200A) of Homo sapiens (Human).